Consider the following 98-residue polypeptide: Small ribosomal subunit protein bS18c (98 aa).

Basic and acidic residues predominate over residues 1-13; the sequence is MSKQSFDFKRYKP. The tract at residues 1–26 is disordered; the sequence is MSKQSFDFKRYKPEAPSGSRKRPLKK.

This sequence belongs to the bacterial ribosomal protein bS18 family. Part of the 30S ribosomal subunit.

It is found in the plastid. The protein localises to the chloroplast. The sequence is that of Small ribosomal subunit protein bS18c from Gnetum parvifolium (Small-leaved jointfir).